Consider the following 393-residue polypeptide: Large ribosomal subunit protein uL2m (393 aa).

The N-terminal 43 residues, 1 to 43, are a transit peptide targeting the mitochondrion; it reads MLVLGSLRSALSCSSTASLISKRNPCYPYGILCRTLSQSVKLW. Residues 337–393 form a disordered region; it reads AMNKCDHPHGGGRGKSKSNKLSMSPWGQLAKGYKTRRGKNQNRMKVKDRPRGKDARL. Residues 369-380 are compositionally biased toward basic residues; sequence YKTRRGKNQNRM. A compositionally biased stretch (basic and acidic residues) spans 381–393; the sequence is KVKDRPRGKDARL.

It belongs to the universal ribosomal protein uL2 family. In terms of assembly, component of the mitochondrial large ribosomal subunit (mt-LSU). Mature yeast 74S mitochondrial ribosomes consist of a small (37S) and a large (54S) subunit. The 37S small subunit contains a 15S ribosomal RNA (15S mt-rRNA) and 34 different proteins. The 54S large subunit contains a 21S rRNA (21S mt-rRNA) and 46 different proteins. uL2m has a Na/K ligand binding site.

The protein resides in the mitochondrion. Its function is as follows. Component of the mitochondrial ribosome (mitoribosome), a dedicated translation machinery responsible for the synthesis of mitochondrial genome-encoded proteins, including at least some of the essential transmembrane subunits of the mitochondrial respiratory chain. The mitoribosomes are attached to the mitochondrial inner membrane and translation products are cotranslationally integrated into the membrane. This is Large ribosomal subunit protein uL2m (RML2) from Saccharomyces cerevisiae (strain ATCC 204508 / S288c) (Baker's yeast).